We begin with the raw amino-acid sequence, 279 residues long: MTRPLSYFHLHLISDATGETLLAAGRAAAAQYANARAIEHIYPLIRTEKQLRKVLEGIDAEPGIVLYTVVDQKLAAIIDESCADMGVPSVSVLEPVLNTFQSYLGAPAHRRASAQHVLNADYFRRIDALNFMMEHDDGQLPLDIEEADVIIVGISRTSKTPTSIYLANRGIKAANVPLVLGIPVPEILFAAKRPLIVGLVATAERISQIRQNRPIGNIPSLDTGLYTDRVSISEELAYARNLCNRHGWPIIDVSRRSIEETAAAILALLRNGKKEGSSS.

153–160 (GISRTSKT) contributes to the ADP binding site.

The protein belongs to the pyruvate, phosphate/water dikinase regulatory protein family. PDRP subfamily.

The catalysed reaction is N(tele)-phospho-L-histidyl/L-threonyl-[pyruvate, phosphate dikinase] + ADP = N(tele)-phospho-L-histidyl/O-phospho-L-threonyl-[pyruvate, phosphate dikinase] + AMP + H(+). It catalyses the reaction N(tele)-phospho-L-histidyl/O-phospho-L-threonyl-[pyruvate, phosphate dikinase] + phosphate + H(+) = N(tele)-phospho-L-histidyl/L-threonyl-[pyruvate, phosphate dikinase] + diphosphate. Functionally, bifunctional serine/threonine kinase and phosphorylase involved in the regulation of the pyruvate, phosphate dikinase (PPDK) by catalyzing its phosphorylation/dephosphorylation. This chain is Putative pyruvate, phosphate dikinase regulatory protein, found in Brucella melitensis biotype 2 (strain ATCC 23457).